The chain runs to 146 residues: Ribonuclease H (146 aa).

The region spanning 1 to 143 (MKKRVTIYTD…CDELARQAIK (143 aa)) is the RNase H type-1 domain. Mg(2+)-binding residues include Asp10, Glu48, Asp70, and Asp135.

This sequence belongs to the RNase H family. As to quaternary structure, monomer. Requires Mg(2+) as cofactor.

Its subcellular location is the cytoplasm. The catalysed reaction is Endonucleolytic cleavage to 5'-phosphomonoester.. In terms of biological role, endonuclease that specifically degrades the RNA of RNA-DNA hybrids. The protein is Ribonuclease H of Chlorobium limicola (strain DSM 245 / NBRC 103803 / 6330).